The sequence spans 463 residues: Cysteine--tRNA ligase (463 aa).

Position 29 (C29) interacts with Zn(2+). Residues 31–41 (ATPQTQPHIGH) carry the 'HIGH' region motif. Residues C212, H237, and E241 each contribute to the Zn(2+) site. Positions 268–272 (KMSKS) match the 'KMSKS' region motif. Residue K271 participates in ATP binding.

The protein belongs to the class-I aminoacyl-tRNA synthetase family. In terms of assembly, monomer. The cofactor is Zn(2+).

The protein localises to the cytoplasm. The catalysed reaction is tRNA(Cys) + L-cysteine + ATP = L-cysteinyl-tRNA(Cys) + AMP + diphosphate. In Corynebacterium diphtheriae (strain ATCC 700971 / NCTC 13129 / Biotype gravis), this protein is Cysteine--tRNA ligase.